A 95-amino-acid polypeptide reads, in one-letter code: Pyruvate dehydrogenase inhibitor (95 aa).

This sequence belongs to the HesB/IscA family. Interacts with the E1 module of pyruvate dehydrogenase (PdhA-PdhB).

In terms of biological role, acts as an inhibitor of the pyruvate dehydrogenase. Overexpression does not affect growth with glucose as the main carbon source, but it leads to a dramatic growth defect when cells are grown with pyruvate as the sole carbon source. The sequence is that of Pyruvate dehydrogenase inhibitor from Bacillus subtilis (strain 168).